We begin with the raw amino-acid sequence, 205 residues long: Probable thymidylate kinase (205 aa).

An ATP-binding site is contributed by 9–16; it reads GIDGVGKS.

Belongs to the thymidylate kinase family.

It carries out the reaction dTMP + ATP = dTDP + ADP. The chain is Probable thymidylate kinase from Caldivirga maquilingensis (strain ATCC 700844 / DSM 13496 / JCM 10307 / IC-167).